The sequence spans 1192 residues: Pyruvate carboxylase (1192 aa).

The interval 1–23 (MAAPRQPEEAVDDTEFIDDHHDQ) is disordered. In terms of domain architecture, Biotin carboxylation spans 40-492 (QFQKILVANR…WTTFIDDTPE (453 aa)). ATP-binding residues include lysine 158, glutamate 242, and histidine 277. The ATP-grasp domain occupies 162-359 (RQLAIRCDVP…IVAAQIQIAA (198 aa)). The active site involves arginine 334. In terms of domain architecture, Pyruvate carboxyltransferase spans 578–846 (CLIMDTTWRD…DPGLNSAQVR (269 aa)). Substrate is bound by residues 586–590 (RDAHQ) and arginine 659. Position 587 (aspartate 587) interacts with a divalent metal cation. Residues lysine 755, histidine 785, and histidine 787 each contribute to the a divalent metal cation site. An N6-carboxylysine modification is found at lysine 755. Threonine 920 is a substrate binding site. Residues 1115–1190 (KAELGDSSQV…DGQDLVCKIV (76 aa)) form the Biotinyl-binding domain. An N6-biotinyllysine modification is found at lysine 1156.

It depends on biotin as a cofactor. Requires Zn(2+) as cofactor.

Its subcellular location is the cytoplasm. The enzyme catalyses hydrogencarbonate + pyruvate + ATP = oxaloacetate + ADP + phosphate + H(+). It functions in the pathway carbohydrate biosynthesis; gluconeogenesis. Functionally, pyruvate carboxylase catalyzes a 2-step reaction, involving the ATP-dependent carboxylation of the covalently attached biotin in the first step and the transfer of the carboxyl group to pyruvate in the second. The protein is Pyruvate carboxylase (pyc) of Aspergillus niger.